Consider the following 80-residue polypeptide: Small ribosomal subunit protein bS16 (80 aa).

Belongs to the bacterial ribosomal protein bS16 family.

The protein is Small ribosomal subunit protein bS16 of Laribacter hongkongensis (strain HLHK9).